The chain runs to 247 residues: Segregation and condensation protein A (247 aa).

This sequence belongs to the ScpA family. Component of a cohesin-like complex composed of ScpA, ScpB and the Smc homodimer, in which ScpA and ScpB bind to the head domain of Smc. The presence of the three proteins is required for the association of the complex with DNA.

Its subcellular location is the cytoplasm. Its function is as follows. Participates in chromosomal partition during cell division. May act via the formation of a condensin-like complex containing Smc and ScpB that pull DNA away from mid-cell into both cell halves. The chain is Segregation and condensation protein A from Mycoplasma mobile (strain ATCC 43663 / 163K / NCTC 11711) (Mesomycoplasma mobile).